Here is a 421-residue protein sequence, read N- to C-terminus: ATP-dependent RNA helicase RhlB (421 aa).

Positions 9-37 (QKFSDFALHAKVIEALENKGFHYCTPIQA) match the Q motif motif. The Helicase ATP-binding domain maps to 40 to 219 (LPLTLAGRDV…FEQMNNAEYV (180 aa)). ATP is bound at residue 53–60 (AQTGTGKT). The DEAD box signature appears at 165-168 (DEAD). The 146-residue stretch at 245 to 390 (RLLQTLIEEE…QSKYNPDALL (146 aa)) folds into the Helicase C-terminal domain. Positions 386–421 (PDALLSELPPPKRLTRARSGNGPRRTGAPRNRRRPG) are disordered. Over residues 405-414 (GNGPRRTGAP) the composition is skewed to low complexity.

This sequence belongs to the DEAD box helicase family. RhlB subfamily. In terms of assembly, component of the RNA degradosome, which is a multiprotein complex involved in RNA processing and mRNA degradation.

It localises to the cytoplasm. It catalyses the reaction ATP + H2O = ADP + phosphate + H(+). Its function is as follows. DEAD-box RNA helicase involved in RNA degradation. Has RNA-dependent ATPase activity and unwinds double-stranded RNA. This is ATP-dependent RNA helicase RhlB from Enterobacter sp. (strain 638).